The following is a 502-amino-acid chain: NAD(P)H-quinone oxidoreductase chain 4, chloroplastic (502 aa).

The next 13 membrane-spanning stretches (helical) occupy residues 4-24 (YPWL…IPLL), 39-59 (LGIC…HFDI), 89-109 (IGLT…AWPV), 115-132 (LFHS…GLFT), 136-156 (ILLF…LLSM), 169-189 (FILY…TMGL), 209-229 (IALE…KLPI), 244-264 (HYST…YGLI), 276-296 (SIFA…AASI), 315-335 (MGFV…GAIL), 387-407 (SLAL…PGIV), 418-438 (IIIT…LLSM), and 466-486 (IFIS…PNLI).

The protein belongs to the complex I subunit 4 family.

Its subcellular location is the plastid. It is found in the chloroplast thylakoid membrane. The enzyme catalyses a plastoquinone + NADH + (n+1) H(+)(in) = a plastoquinol + NAD(+) + n H(+)(out). The catalysed reaction is a plastoquinone + NADPH + (n+1) H(+)(in) = a plastoquinol + NADP(+) + n H(+)(out). The chain is NAD(P)H-quinone oxidoreductase chain 4, chloroplastic from Huperzia lucidula (Shining clubmoss).